The sequence spans 459 residues: tRNA modification GTPase MnmE (459 aa).

Residues Arg21, Glu84, and Arg123 each coordinate (6S)-5-formyl-5,6,7,8-tetrahydrofolate. Residues 219 to 378 form the TrmE-type G domain; it reads GVTVALAGAV…LLVLLYNFVL (160 aa). Residues 229–234, 248–254, and 273–276 contribute to the GTP site; these read NAGKSS, TEHPGTT, and DTAG. Mg(2+)-binding residues include Ser233 and Thr254. Lys459 lines the (6S)-5-formyl-5,6,7,8-tetrahydrofolate pocket.

It belongs to the TRAFAC class TrmE-Era-EngA-EngB-Septin-like GTPase superfamily. TrmE GTPase family. Homodimer. Heterotetramer of two MnmE and two MnmG subunits. It depends on K(+) as a cofactor.

It is found in the cytoplasm. Its function is as follows. Exhibits a very high intrinsic GTPase hydrolysis rate. Involved in the addition of a carboxymethylaminomethyl (cmnm) group at the wobble position (U34) of certain tRNAs, forming tRNA-cmnm(5)s(2)U34. The chain is tRNA modification GTPase MnmE from Lawsonia intracellularis (strain PHE/MN1-00).